Consider the following 1025-residue polypeptide: Beta-galactosidase (1025 aa).

Substrate-binding residues include asparagine 103 and aspartate 202. Aspartate 202 contacts Na(+). Mg(2+) is bound by residues glutamate 417, histidine 419, and glutamate 462. Residues glutamate 462 and 538–541 (EYAH) each bind substrate. Catalysis depends on glutamate 462, which acts as the Proton donor. The Nucleophile role is filled by glutamate 538. A Mg(2+)-binding site is contributed by asparagine 598. Phenylalanine 602 and asparagine 605 together coordinate Na(+). Substrate contacts are provided by asparagine 605 and tryptophan 1003.

Belongs to the glycosyl hydrolase 2 family. Homotetramer. The cofactor is Mg(2+). Requires Na(+) as cofactor.

It carries out the reaction Hydrolysis of terminal non-reducing beta-D-galactose residues in beta-D-galactosides.. The chain is Beta-galactosidase from Citrobacter koseri (strain ATCC BAA-895 / CDC 4225-83 / SGSC4696).